A 347-amino-acid chain; its full sequence is MDRFRMLFQHLQSSSESVMNGICLLLAAVTVKIYSSLDFNCPCLERYNALYGLGLLLTPPLALFLCGLLVNRQSVLMVEEWRRPAGHRRKDLGIIRYMCSSVLQRALAAPLVWILLALLDGKCFVCAFSNSVDPEKFLDFANMTPRQVQLFLAKVPCKEDELVKNSPARKAVSRYLRCLSQAIGWSITLLVIVVAFLARCLRPCFDQTVFLQRRYWSNYMDLEQKLFDETCCEHARDFAHRCVLHFFANMQSELRALGLRRDPAGGIPESQESSEPPELREDRDSGNGKAHLRAISSREQVDQLLSTWYSSKPPLDLAASPRRWGPGLNHRAPIAAPGTKLCHQLNV.

Over 1–20 (MDRFRMLFQHLQSSSESVMN) the chain is Cytoplasmic. The interval 9–36 (QHLQSSSESVMNGICLLLAAVTVKIYSS) is central pore. A helical membrane pass occupies residues 21-36 (GICLLLAAVTVKIYSS). Topologically, residues 37-48 (LDFNCPCLERYN) are extracellular. Intrachain disulfides connect Cys41–Cys126 and Cys43–Cys157. Residues 49 to 71 (ALYGLGLLLTPPLALFLCGLLVN) form a helical membrane-spanning segment. Residues 72–98 (RQSVLMVEEWRRPAGHRRKDLGIIRYM) are Cytoplasmic-facing. Cys99 is lipidated: S-palmitoyl cysteine. A helical membrane pass occupies residues 99 to 124 (CSSVLQRALAAPLVWILLALLDGKCF). The Extracellular segment spans residues 125 to 176 (VCAFSNSVDPEKFLDFANMTPRQVQLFLAKVPCKEDELVKNSPARKAVSRYL). An N-linked (GlcNAc...) asparagine glycan is attached at Asn142. Residues 177-202 (RCLSQAIGWSITLLVIVVAFLARCLR) traverse the membrane as a helical segment. 2 S-palmitoyl cysteine lipidation sites follow: Cys200 and Cys204. Topologically, residues 203-347 (PCFDQTVFLQ…GTKLCHQLNV (145 aa)) are cytoplasmic. The disordered stretch occupies residues 265 to 290 (GGIPESQESSEPPELREDRDSGNGKA). Residues 277-286 (PELREDRDSG) show a composition bias toward basic and acidic residues.

This sequence belongs to the CALHM family. As to quaternary structure, associates with CALHM1 as a pore-forming subunit in a hetero-hexameric channel complex. N-glycosylated. In terms of processing, palmitoylated by ZDHHC3 and ZDHHC15. Palmitoylation positively regulates CALHM1:CALHM3 channel conductance. Expressed in taste bud cells.

It localises to the basolateral cell membrane. The catalysed reaction is ATP(in) = ATP(out). The enzyme catalyses Ca(2+)(in) = Ca(2+)(out). It catalyses the reaction Na(+)(in) = Na(+)(out). It carries out the reaction K(+)(in) = K(+)(out). The catalysed reaction is chloride(in) = chloride(out). Functionally, pore-forming subunit of gustatory voltage-gated ion channels required for sensory perception of sweet, bitter and umami tastes. With CALHM1 forms a fast-activating voltage-gated ATP-release channel in type II taste bud cells, ATP acting as a neurotransmitter to activate afferent neural gustatory pathways. Acts both as a voltage-gated and calcium-activated ion channel: mediates neuronal excitability in response to membrane depolarization and low extracellular Ca(2+) concentration. Has poor ion selectivity and forms a wide pore (around 14 Angstroms) that mediates permeation of small ions including Ca(2+), Na(+), K(+) and Cl(-), as well as larger ions such as ATP(4-). This is Calcium homeostasis modulator protein 3 from Mus musculus (Mouse).